A 295-amino-acid polypeptide reads, in one-letter code: ATP synthase gamma chain (295 aa).

This sequence belongs to the ATPase gamma chain family. As to quaternary structure, F-type ATPases have 2 components, CF(1) - the catalytic core - and CF(0) - the membrane proton channel. CF(1) has five subunits: alpha(3), beta(3), gamma(1), delta(1), epsilon(1). CF(0) has three main subunits: a, b and c.

Its subcellular location is the cell inner membrane. Functionally, produces ATP from ADP in the presence of a proton gradient across the membrane. The gamma chain is believed to be important in regulating ATPase activity and the flow of protons through the CF(0) complex. In Cytophaga hutchinsonii (strain ATCC 33406 / DSM 1761 / CIP 103989 / NBRC 15051 / NCIMB 9469 / D465), this protein is ATP synthase gamma chain.